Consider the following 885-residue polypeptide: Protein PML (885 aa).

Residues 1–48 (METEPVSVQKVPAPPGSPCRQQDSALTPTPTMPPPEEPSEDYEHSQSP) are disordered. At S17 the chain carries Phosphoserine; by HIPK2. 2 positions are modified to phosphoserine; by HIPK2 and MAPK1: S45 and S47. Zn(2+) is bound by residues C62 and C65. The RING-type zinc finger occupies 62–97 (CPSCQAQAKCPKLLPCLHTLCSGCLEAPGLQCPICK). K70 participates in a covalent cross-link: Glycyl lysine isopeptide (Lys-Gly) (interchain with G-Cter in SUMO); alternate. K70 is covalently cross-linked (Glycyl lysine isopeptide (Lys-Gly) (interchain with G-Cter in SUMO2); alternate). C77, H79, C82, C85, C93, C96, C134, C137, C156, and H160 together coordinate Zn(2+). B box-type zinc fingers lie at residues 129-171 (DAQA…ARPL) and 188-239 (KSNI…EIQQ). A Glycyl lysine isopeptide (Lys-Gly) (interchain with G-Cter in SUMO); alternate cross-link involves residue K165. A Glycyl lysine isopeptide (Lys-Gly) (interchain with G-Cter in SUMO2); alternate cross-link involves residue K165. Zn(2+)-binding residues include C193, H198, C219, and H226. Positions 295-331 (QAQERELLEAVNDRYQRDYQEIAGQLSCLEAVLQRIR) form a coiled coil. A Glycyl lysine isopeptide (Lys-Gly) (interchain with G-Cter in SUMO2); alternate cross-link involves residue K384. K384 is covalently cross-linked (Glycyl lysine isopeptide (Lys-Gly) (interchain with G-Cter in ubiquitin); alternate). S404 is modified (phosphoserine). The segment at 404-434 (SPEAASNQPEAASTHPVTTSTPEDLEQPKEV) is disordered. Residues 407 to 425 (AASNQPEAASTHPVTTSTP) show a composition bias toward polar residues. The segment at 458-565 (GAHPVPVYAF…TSDTGETEER (108 aa)) is interaction with PER2. K486 is covalently cross-linked (Glycyl lysine isopeptide (Lys-Gly) (interchain with G-Cter in SUMO2); alternate). K486 participates in a covalent cross-link: Glycyl lysine isopeptide (Lys-Gly) (interchain with G-Cter in ubiquitin); alternate. Residues 486–500 (KRKCSHEDCSRKIIK) carry the Nuclear localization signal motif. A Glycyl lysine isopeptide (Lys-Gly) (interchain with G-Cter in SUMO2) cross-link involves residue K488. Glycyl lysine isopeptide (Lys-Gly) (interchain with G-Cter in SUMO2); alternate cross-links involve residues K497 and K500. K497 is modified (N6-acetyllysine; alternate). K500 participates in a covalent cross-link: Glycyl lysine isopeptide (Lys-Gly) (interchain with G-Cter in SUMO); alternate. The segment at 500-599 (KMESTEENED…SESSSLQLEG (100 aa)) is disordered. A phosphoserine mark is found at S503 and S514. The segment covering 512-526 (ATSSPEQSWPSTFKA) has biased composition (polar residues). Position 515 is a phosphoserine; by MAPK1 (S515). A Phosphoserine modification is found at S522. An N6-acetyllysine modification is found at K525. At S528 the chain carries Phosphoserine; by CDK1 and CDK2. T535 is modified (phosphothreonine). S536 carries the phosphoserine modification. Phosphoserine; by MAPK1 is present on S540. Over residues 550–559 (PNNNHVTSDT) the composition is skewed to polar residues. The interval 566–572 (VVVISSS) is sumo interaction motif (SIM). S575 is modified (phosphoserine; by CK2). S609 is modified (phosphoserine).

Key component of PML bodies. PML bodies are formed by the interaction of PML homodimers (via SUMO-binding motif) with sumoylated PML, leading to the assembly of higher oligomers. Several types of PML bodies have been observed. PML bodies can form hollow spheres that can sequester target proteins inside. Interacts (via SUMO-binding motif) with sumoylated proteins. Interacts (via C-terminus) with p53/TP53. Recruits p53/TP53 and CHEK2 into PML bodies, which promotes p53/TP53 phosphorylation at 'Ser-20' and prevents its proteasomal degradation. Interacts with MDM2, and sequesters MDM2 in the nucleolus, thereby preventing ubiquitination of p53/TP53. Interaction with PML-RARA oncoprotein and certain viral proteins causes disassembly of PML bodies and abolishes the normal PML function. Interacts with TERT, SIRT1, TOPBP1, TRIM27 and TRIM69. Interacts with ELF4 (via C-terminus). Interacts with Lassa virus Z protein and rabies virus phosphoprotein. Interacts (in the cytoplasm) with TGFBR1, TGFBR2 and PKM. Interacts (via the coiled-coil domain and when sumoylated) with SATB1. Interacts with UBE2I; the interaction is enhanced by arsenic binding. Interacts with SMAD2, SMAD3, DAXX, RPL11, HIPK2 and MTOR. Interacts with ITPR3, PPP1A and RB1. Interacts with RNF4, NLRP3, MAGEA2, RBL2, PER2, E2F4 and MAPK7/BMK1. Interacts with CSNK2A1 and CSNK2A3. Interacts with ANKRD2; the interaction is direct. Interacts with PPARGC1A and KAT2A. Interacts (via SUMO-interacting motif) with sumoylated MORC3. Interacts with TRIM16. Interacts with PRDM1. Interacts (via RING-type zinc finger) with EIF4E; the interaction reduces EIF4E affinity for the 5' m7G cap of mRNA, thus reducing nuclear export of cyclin CCND1. Post-translationally, ubiquitinated; mediated by RNF4, RNF111, UHRF1, UBE3A/E6AP, BCR(KLHL20) E3 ubiquitin ligase complex, SIAH1 or SIAH2 and leading to subsequent proteasomal degradation. 'Lys-6'-, 'Lys-11'-, 'Lys-48'- and 'Lys-63'-linked polyubiquitination by RNF4 is polysumoylation-dependent. Ubiquitination by RNF111 is polysumoylation-dependent. Ubiquitination by BCR(KLHL20) E3 ubiquitin ligase complex requires CDK1/2-mediated phosphorylation at Ser-528 which in turn is recognized by prolyl-isopeptidase PIN1 and PIN1-catalyzed isomerization further potentiates PML interaction with KLHL20. Sumoylation regulates PML's: stability in response to extracellular or intracellular stimuli, transcription directly and indirectly, through sequestration of or dissociation of the transcription factors from PML-NBs, ability to regulate apoptosis and its anti-viral activities. It is also essential for: maintaining proper PML nuclear bodies (PML-NBs) structure and normal function, recruitment of components of PML-NBs, the turnover and retention of PML in PML-NBs and the integrity of PML-NBs. Undergoes 'Lys-11'-linked sumoylation. Sumoylation on all three sites (Lys-70, Lys-165 and Lys-500) is required for nuclear body formation. Sumoylation on Lys-165 is a prerequisite for sumoylation on Lys-70. Lys-70 and Lys-165 are sumoylated by PISA1 and PIAS2. PIAS1-mediated sumoylation of PML promotes its interaction with CSNK2A1/CK2 and phosphorylation at Ser-575 which in turn triggers its ubiquitin-mediated degradation. Sumoylation at Lys-500 by RANBP2 is essential for the proper assembly of PML-NBs. Desumoylated by SENP1, SENP2, SENP3, SENP5 and SENP6. In terms of processing, phosphorylation is a major regulatory mechanism that controls PML protein abundance and the number and size of PML nuclear bodies (PML-NBs). Phosphorylated in response to DNA damage, probably by ATR. HIPK2-mediated phosphorylation at Ser-17, Ser-45 and Ser-47 leads to increased accumulation of PML protein and its sumoylation and is required for the maximal pro-apoptotic activity of PML after DNA damage. MAPK1- mediated phosphorylations at Ser-404, Ser-515 and Ser-540 and CDK1/2-mediated phosphorylation at Ser-528 promote PIN1-dependent PML degradation. CK2-mediated phosphorylation at Ser-575 primes PML ubiquitination via an unidentified ubiquitin ligase. Post-translationally, acetylation at Lys-497 is essential for its nuclear localization. Deacetylated at Lys-497 by SIRT1 and this deacetylation promotes PML control of PER2 nuclear localization.

It localises to the nucleus. The protein resides in the nucleoplasm. The protein localises to the cytoplasm. Its subcellular location is the PML body. It is found in the nucleolus. It localises to the endoplasmic reticulum membrane. The protein resides in the early endosome membrane. Functionally, functions via its association with PML-nuclear bodies (PML-NBs) in a wide range of important cellular processes, including tumor suppression, transcriptional regulation, apoptosis, senescence, DNA damage response, and viral defense mechanisms. Acts as the scaffold of PML-NBs allowing other proteins to shuttle in and out, a process which is regulated by SUMO-mediated modifications and interactions. Inhibits EIF4E-mediated mRNA nuclear export by reducing EIF4E affinity for the 5' 7-methylguanosine (m7G) cap of target mRNAs. Positively regulates p53/TP53 by acting at different levels (by promoting its acetylation and phosphorylation and by inhibiting its MDM2-dependent degradation). Regulates phosphorylation of ITPR3 and plays a role in the regulation of calcium homeostasis at the endoplasmic reticulum. Regulates RB1 phosphorylation and activity. Acts as both a negative regulator of PPARGC1A acetylation and a potent activator of PPAR signaling and fatty acid oxidation. Regulates translation of HIF1A by sequestering MTOR, and thereby plays a role in neoangiogenesis and tumor vascularization. Regulates PER2 nuclear localization and circadian function. Cytoplasmic PML is involved in the regulation of the TGF-beta signaling pathway. Required for normal development of the brain cortex during embryogenesis. Plays a role in granulopoiesis or monopoiesis of myeloid progenitor cells. May play a role regulating stem and progenitor cell fate in tissues as diverse as blood, brain and breast. Shows antiviral activity towards lymphocytic choriomeningitis virus (LCMV) and the vesicular stomatitis virus (VSV). The chain is Protein PML (Pml) from Mus musculus (Mouse).